The following is a 158-amino-acid chain: Rhombotin-2 (158 aa).

LIM zinc-binding domains are found at residues 30-89 (CGGC…RLFG) and 94-153 (CASC…EWTK).

Interacts via its LIM domains with ELF2 and LDB1. Also interacts with basic helix-loop-helix protein TAL1/SCL and can assemble in a complex with LMO2 and TAL1/SCL. Interacts with BEX2 and KDM5A.

It is found in the nucleus. Functionally, acts with TAL1/SCL to regulate red blood cell development. Also acts with LDB1 to maintain erythroid precursors in an immature state. The protein is Rhombotin-2 (LMO2) of Homo sapiens (Human).